The sequence spans 150 residues: UPF0178 protein Bcep18194_A4809 (150 aa).

This sequence belongs to the UPF0178 family.

The sequence is that of UPF0178 protein Bcep18194_A4809 from Burkholderia lata (strain ATCC 17760 / DSM 23089 / LMG 22485 / NCIMB 9086 / R18194 / 383).